The primary structure comprises 364 residues: Transcription factor SPEECHLESS (364 aa).

A disordered region spans residues 35-109 (GEISPTAAST…QKMSHVTVER (75 aa)). Phosphoserine; by ASK7 is present on serine 38. Threonine 40 carries the post-translational modification Phosphothreonine; by ASK7. A compositionally biased stretch (polar residues) spans 40–53 (TAASTPKDGTTSSK). Position 43 is a phosphoserine; by ASK7 (serine 43). Phosphothreonine; by ASK7 is present on threonine 44. Serine 65 bears the Phosphoserine; by ASK7 mark. Residues 79 to 92 (EDEEEEDGDGEAEE) are compositionally biased toward acidic residues. Residues 99-112 (QQKMSHVTVERNRR) are basic motif. The region spanning 99-150 (QQKMSHVTVERNRRKQMNEHLTVLRSLMPCFYVKRGDQASIIGGVVEYISEL) is the bHLH domain. The interval 113–150 (KQMNEHLTVLRSLMPCFYVKRGDQASIIGGVVEYISEL) is helix-loop-helix motif. Position 171 is a phosphoserine; by ASK7 (serine 171). A disordered region spans residues 171 to 227 (SPRVVPSPRPSPPVLSPRKPPLSPRINHHQIHHHLLLPPISPRTPQPTSPYRAIPPQ). Residues 175-193 (VPSPRPSPPVLSPRKPPLS) show a composition bias toward pro residues. The residue at position 177 (serine 177) is a Phosphoserine; by ASK7, MPK3 and MPK6. At serine 181 the chain carries Phosphoserine; by ASK7. Residue serine 186 is modified to Phosphoserine; by CDKA-1, ASK7, MPK3 and MPK6. Serine 193 is subject to Phosphoserine; by MPK3 and MPK6. Basic residues predominate over residues 196 to 205 (INHHQIHHHL). A compositionally biased stretch (pro residues) spans 209–218 (PISPRTPQPT). The residue at position 211 (serine 211) is a Phosphoserine; by MPK3 and MPK6. Threonine 214 is subject to Phosphothreonine; by ASK7, MPK3 and MPK6. Serine 219 carries the post-translational modification Phosphoserine; by ASK7, MPK3 and MPK6.

Homodimer. Forms dimers with SCRM and SCRM2. May interact with CDKA-1. Post-translationally, phosphorylated by ASK7/BIN2 and ASK3/SK12; this post-translational modification inhibits activity and limit epidermal cell proliferation. Phosphorylation by MPK3 and MPK6 leads to the inhibition of stomatal fate and to degradation. Stabilized by CDKA-1-mediated phosphorylation at Ser-186 which promotes stomatal development. In terms of tissue distribution, expressed in developing leaf epidermis. Reduced accumulation in the stomatal lineage ground cells (SLGCs) where BASL is polarized in the cell cortex. Observed in small cells of non-protruding hypocotyl cell files and of developing cotyledon epidermis. Restricted to meristemoids (stomatal precursor cell) in leaves epidermis, mostly in dividing cells of non-protruding cell files.

It is found in the nucleus. Its activity is regulated as follows. Negatively regulated through phosphorylation by the MAPK module. Activity is constrained by polarized BASL in stomatal lineage ground cells (SLGCs) undergoing ACD. Transcription factor acting as an integration node for stomata and brassinosteroid (BR) signaling pathways to control stomatal initiation and development. Activates transcription when in the presence of SCRM/ICE1. Functions as a dimer with SCRM or SCRM2 during stomatal initiation. Required for the initiation, the spacing and the formation of stomata, by promoting the first asymmetric cell divisions. Together with FMA and MUTE, modulates the stomata formation. Involved in the regulation of growth reduction under osmotic stress (e.g. mannitol), associated with a quick decrease of meristemoid mother cells (MMCs) number lower stomatal index and density. The polypeptide is Transcription factor SPEECHLESS (Arabidopsis thaliana (Mouse-ear cress)).